Consider the following 338-residue polypeptide: Heat-inducible transcription repressor HrcA (338 aa).

The protein belongs to the HrcA family.

Negative regulator of class I heat shock genes (grpE-dnaK-dnaJ and groELS operons). Prevents heat-shock induction of these operons. This chain is Heat-inducible transcription repressor HrcA, found in Polaromonas sp. (strain JS666 / ATCC BAA-500).